The primary structure comprises 220 residues: NADH-quinone oxidoreductase subunit B (220 aa).

[4Fe-4S] cluster-binding residues include cysteine 37, cysteine 38, cysteine 103, and cysteine 132. A disordered region spans residues proline 174–arginine 220. Over residues leucine 210–arginine 220 the composition is skewed to basic and acidic residues.

This sequence belongs to the complex I 20 kDa subunit family. NDH-1 is composed of 14 different subunits. Subunits NuoB, C, D, E, F, and G constitute the peripheral sector of the complex. [4Fe-4S] cluster is required as a cofactor.

The protein localises to the cell membrane. It catalyses the reaction a quinone + NADH + 5 H(+)(in) = a quinol + NAD(+) + 4 H(+)(out). Its function is as follows. NDH-1 shuttles electrons from NADH, via FMN and iron-sulfur (Fe-S) centers, to quinones in the respiratory chain. The immediate electron acceptor for the enzyme in this species is believed to be a menaquinone. Couples the redox reaction to proton translocation (for every two electrons transferred, four hydrogen ions are translocated across the cytoplasmic membrane), and thus conserves the redox energy in a proton gradient. In Saccharopolyspora erythraea (strain ATCC 11635 / DSM 40517 / JCM 4748 / NBRC 13426 / NCIMB 8594 / NRRL 2338), this protein is NADH-quinone oxidoreductase subunit B.